The sequence spans 209 residues: Transcription factor 23 (209 aa).

2 disordered regions span residues 1–20 and 54–85; these read MSQE…GHNK and LSRA…ARER. Basic and acidic residues predominate over residues 72-85; the sequence is GRSEASPENAARER. In terms of domain architecture, bHLH spans 75-127; sequence EASPENAARERTRVKTLRQAFLALQAALPAVPPDTKLSKLDVLVLATSYIAHL.

In terms of assembly, forms inactive heterodimeric complex with TCF3. Highly expressed in the uterus (predominantly in myometrium), ovary, and testis. Expression in the uterus is higher in the diestrus phase than in the estrus phase and reaches a maximum at 7.5 dpc. Expression declines towards the time of delivery and returns to the non-pregnant level 4 days after delivery. Low expression seen in lung, heart, intestine, and spleen.

It localises to the nucleus. Inhibits E-box-mediated binding and transactivation of bHLH factors. Inhibitory effect is similar to that of ID proteins. Inhibits the formation of TCF3 and MYOD1 homodimers and heterodimers. Lacks DNA binding activity. May be involved in the regulation or modulation of smooth muscle contraction of the uterus during pregnancy and particularly around the time of delivery. Seems to play a role in the inhibition of myogenesis. In Mus musculus (Mouse), this protein is Transcription factor 23 (Tcf23).